Here is a 440-residue protein sequence, read N- to C-terminus: Enolase 1 (440 aa).

His-161 and Glu-170 together coordinate substrate. Glu-213 serves as the catalytic Proton donor. Mg(2+)-binding residues include Asp-248, Glu-297, and Asp-324. Substrate contacts are provided by Glu-297 and Asp-324. Lys-349 serves as the catalytic Proton acceptor. Substrate is bound by residues 376 to 379 (SHRS) and Lys-400.

This sequence belongs to the enolase family. Homodimer. Requires Mg(2+) as cofactor.

Its subcellular location is the cytoplasm. The catalysed reaction is (2R)-2-phosphoglycerate = phosphoenolpyruvate + H2O. It participates in carbohydrate degradation; glycolysis; pyruvate from D-glyceraldehyde 3-phosphate: step 4/5. This Candida albicans (strain SC5314 / ATCC MYA-2876) (Yeast) protein is Enolase 1 (ENO1).